The primary structure comprises 415 residues: tRNA(Ile2) 2-agmatinylcytidine synthetase TiaS (415 aa).

The protein belongs to the TiaS family.

Its subcellular location is the cytoplasm. It catalyses the reaction cytidine(34) in tRNA(Ile2) + agmatine + ATP + H2O = 2-agmatinylcytidine(34) in tRNA(Ile2) + AMP + 2 phosphate + 2 H(+). In terms of biological role, ATP-dependent agmatine transferase that catalyzes the formation of 2-agmatinylcytidine (agm2C) at the wobble position (C34) of tRNA(Ile2), converting the codon specificity from AUG to AUA. The sequence is that of tRNA(Ile2) 2-agmatinylcytidine synthetase TiaS from Pyrobaculum neutrophilum (strain DSM 2338 / JCM 9278 / NBRC 100436 / V24Sta) (Thermoproteus neutrophilus).